The following is a 111-amino-acid chain: Ribonuclease P protein component (111 aa).

It belongs to the RnpA family. In terms of assembly, consists of a catalytic RNA component (M1 or rnpB) and a protein subunit.

It carries out the reaction Endonucleolytic cleavage of RNA, removing 5'-extranucleotides from tRNA precursor.. In terms of biological role, RNaseP catalyzes the removal of the 5'-leader sequence from pre-tRNA to produce the mature 5'-terminus. It can also cleave other RNA substrates such as 4.5S RNA. The protein component plays an auxiliary but essential role in vivo by binding to the 5'-leader sequence and broadening the substrate specificity of the ribozyme. In Fusobacterium nucleatum subsp. nucleatum (strain ATCC 25586 / DSM 15643 / BCRC 10681 / CIP 101130 / JCM 8532 / KCTC 2640 / LMG 13131 / VPI 4355), this protein is Ribonuclease P protein component.